A 217-amino-acid polypeptide reads, in one-letter code: 3,4-dihydroxy-2-butanone 4-phosphate synthase (217 aa).

D-ribulose 5-phosphate contacts are provided by residues 37–38, D42, 150–154, and E174; these read RE and RGGHT. Residue E38 participates in Mg(2+) binding. H153 contacts Mg(2+).

It belongs to the DHBP synthase family. Homodimer. Mg(2+) serves as cofactor. Requires Mn(2+) as cofactor.

It catalyses the reaction D-ribulose 5-phosphate = (2S)-2-hydroxy-3-oxobutyl phosphate + formate + H(+). It participates in cofactor biosynthesis; riboflavin biosynthesis; 2-hydroxy-3-oxobutyl phosphate from D-ribulose 5-phosphate: step 1/1. Catalyzes the conversion of D-ribulose 5-phosphate to formate and 3,4-dihydroxy-2-butanone 4-phosphate. In Proteus mirabilis (strain HI4320), this protein is 3,4-dihydroxy-2-butanone 4-phosphate synthase.